Reading from the N-terminus, the 450-residue chain is UDP-N-acetylmuramoylalanine--D-glutamate ligase (450 aa).

119–125 (GSNGKTT) contributes to the ATP binding site.

The protein belongs to the MurCDEF family.

The protein resides in the cytoplasm. It carries out the reaction UDP-N-acetyl-alpha-D-muramoyl-L-alanine + D-glutamate + ATP = UDP-N-acetyl-alpha-D-muramoyl-L-alanyl-D-glutamate + ADP + phosphate + H(+). It functions in the pathway cell wall biogenesis; peptidoglycan biosynthesis. Its function is as follows. Cell wall formation. Catalyzes the addition of glutamate to the nucleotide precursor UDP-N-acetylmuramoyl-L-alanine (UMA). The protein is UDP-N-acetylmuramoylalanine--D-glutamate ligase of Streptococcus pneumoniae serotype 4 (strain ATCC BAA-334 / TIGR4).